Consider the following 149-residue polypeptide: Early lymphoid activation gene protein (149 aa).

As to expression, expressed in heart, kidney, lung, and skeletal muscle, with lower levels in pancreas and liver.

In terms of biological role, may function as an early signal that helps mediate the activation of T-cells. The polypeptide is Early lymphoid activation gene protein (DIAPH2-AS1) (Homo sapiens (Human)).